The chain runs to 1159 residues: Ferroxidase HEPHL1 (1159 aa).

The signal sequence occupies residues 1–23; that stretch reads MFLKQPGGCILLQFLGLLGLVGA. 6 Plastocyanin-like domains span residues 24 to 206, 217 to 365, 378 to 560, 570 to 718, 730 to 906, and 914 to 1092; these read VTRT…LLVC, MRTD…VGNC, QRRY…LLVC, TQKG…ISSC, MLRT…LITC, and KGRR…VPSQ. Residues 24-1114 lie on the Extracellular side of the membrane; sequence VTRTYYIGIV…KNLRPRGAKA (1091 aa). Cu cation-binding residues include His-126 and His-128. N-linked (GlcNAc...) asparagine glycosylation occurs at Asn-160. A disulfide bridge links Cys-180 with Cys-206. Residues His-186 and His-188 each coordinate Cu cation. Asn-235 carries an N-linked (GlcNAc...) asparagine glycan. Cys-284 and Cys-365 form a disulfide bridge. Positions 303, 346, and 351 each coordinate Cu cation. A glycan (N-linked (GlcNAc...) asparagine) is linked at Asn-406. A disulfide bridge connects residues Cys-534 and Cys-560. An N-linked (GlcNAc...) asparagine glycan is attached at Asn-588. Residues Cys-637 and Cys-718 are joined by a disulfide bond. Cu cation is bound by residues His-656, Cys-699, His-704, and Met-709. Asn-771 carries N-linked (GlcNAc...) asparagine glycosylation. Cys-880 and Cys-906 are oxidised to a cystine. N-linked (GlcNAc...) asparagine glycosylation is present at Asn-934. Residues His-1002, His-1005, His-1007, His-1047, Cys-1048, His-1049, His-1053, and Met-1058 each contribute to the Cu cation site. Residues 1115 to 1135 traverse the membrane as a helical segment; it reads ALVILFILGLLLLVATVVLAL. The Cytoplasmic portion of the chain corresponds to 1136 to 1159; it reads RLRSSRRQMAYREVQSCALPTDAL.

The protein belongs to the multicopper oxidase family. Cu cation serves as cofactor.

Its subcellular location is the membrane. It catalyses the reaction 4 Fe(2+) + O2 + 4 H(+) = 4 Fe(3+) + 2 H2O. In terms of biological role, is a copper-binding glycoprotein with ferroxidase activity. It oxidizes Fe(2+) to Fe(3+) without releasing radical oxygen species. May be involved in the regulation of intracellular iron content. The chain is Ferroxidase HEPHL1 (Hephl1) from Mus musculus (Mouse).